A 595-amino-acid polypeptide reads, in one-letter code: Sorting nexin-9 (595 aa).

An SH3 domain is found at 1–62 (MATKARVMYD…PTDYVEILPS (62 aa)). The disordered stretch occupies residues 91–201 (SSSAASNNHQ…GNSRASSSSM (111 aa)). 2 stretches are compositionally biased toward polar residues: residues 111 to 121 (WSASKSGNWES) and 135 to 145 (QRNTNTPNNWD). A phosphoserine mark is found at Ser116 and Ser121. Over residues 160 to 169 (GDDDDWDEDW) the composition is skewed to acidic residues. Residues 191-201 (RGNSRASSSSM) are compositionally biased toward polar residues. Ser197 and Ser200 each carry phosphoserine. Positions 201-213 (MKIPLNKFPGFAK) are critical for tubulation activity. Position 216 is a phosphothreonine (Thr216). Tyr239 carries the phosphotyrosine modification. The PX domain occupies 250-361 (FDCVVADPRK…QFLNFRDEKE (112 aa)). Residues Arg286, Lys288, and Arg327 each contribute to the a 1,2-diacyl-sn-glycero-3-phospho-(1D-myo-inositol-4,5-bisphosphate) site. Lys288 carries the post-translational modification N6-acetyllysine. One can recognise a BAR domain in the interval 392–595 (LVEIEQKCEA…RQALSRFPVM (204 aa)).

Belongs to the sorting nexin family. In terms of assembly, homodimer, and homooligomer. Heterodimer with SNX18. Interacts with ITCH. Interacts (via SH3 domain) with TNK2, WASL and ACTR3. Identified in a complex with TNK2 and clathrin heavy chains. Identified in a complex with the AP-2 complex, clathrin and DNM2. Interacts (via SH3 domain) with DNM1 and DNM2. Identified in an oligomeric complex containing DNM1 and SNX9. Interacts with FCHSD1. Interacts with ADAM9 and ADAM15 cytoplasmic tails. Ubiquitinated by ITCH. Post-translationally, phosphorylated on tyrosine residues by TNK2. Phosphorylation promotes its activity in the degradation of EGFR. As to expression, widely expressed, with highest levels in heart and placenta, and lowest levels in thymus and peripheral blood leukocytes.

It localises to the cytoplasmic vesicle membrane. Its subcellular location is the cell membrane. The protein resides in the cytoplasmic vesicle. The protein localises to the clathrin-coated vesicle. It is found in the golgi apparatus. It localises to the trans-Golgi network. Its subcellular location is the cell projection. The protein resides in the ruffle. The protein localises to the cytoplasm. Its function is as follows. Involved in endocytosis and intracellular vesicle trafficking, both during interphase and at the end of mitosis. Required for efficient progress through mitosis and cytokinesis. Required for normal formation of the cleavage furrow at the end of mitosis. Plays a role in endocytosis via clathrin-coated pits, but also clathrin-independent, actin-dependent fluid-phase endocytosis. Plays a role in macropinocytosis. Promotes internalization of TNFR. Promotes degradation of EGFR after EGF signaling. Stimulates the GTPase activity of DNM1. Promotes DNM1 oligomerization. Promotes activation of the Arp2/3 complex by WASL, and thereby plays a role in the reorganization of the F-actin cytoskeleton. Binds to membranes enriched in phosphatidylinositol 4,5-bisphosphate and promotes membrane tubulation. Has lower affinity for membranes enriched in phosphatidylinositol 3-phosphate. The sequence is that of Sorting nexin-9 (SNX9) from Homo sapiens (Human).